A 992-amino-acid polypeptide reads, in one-letter code: GYF domain-containing protein mpd2 (992 aa).

Disordered stretches follow at residues 24–105, 172–245, and 289–316; these read ANNS…SANP, GTAS…NVAS, and FSQSPLRRGPSRFPTNSNVPVGNSMSIR. 2 stretches are compositionally biased toward polar residues: residues 25–58 and 75–104; these read NNSSSSTTGAFPQLTSFTKPTATNGVDSPTSSHI and KSGNMWDSLNAPSELTSKNPTVSSTTSSAN. Serine 175 is modified (phosphoserine). The span at 193–205 shows a compositional bias: low complexity; the sequence is SPSSFSQSRSAVS. Composition is skewed to polar residues over residues 214-237 and 301-315; these read TLQQPQRAGSDTFPDLNTSSSNQP and FPTNSNVPVGNSMSI. Threonine 318 carries the phosphothreonine modification. Serine 320 bears the Phosphoserine mark. Positions 336 to 359 are disordered; the sequence is KENASQPVAPSASQREHSAVNSPA. Positions 337-348 are enriched in polar residues; sequence ENASQPVAPSAS. The GYF domain occupies 386–434; that stretch reads LLHWLYKDPQNNVQGPFTGVDMHQWYRAGYFPLGLPIKRLEEEEYYSLA. Disordered regions lie at residues 467–486, 496–563, 576–637, 651–682, 697–729, 760–794, 818–859, and 940–992; these read DLPLSNYLPESSEQNRGGNK, EVSN…NESL, SEET…HLPS, SEALPQVEKSNSDQPPVAIPSTSKTGSPWAKV, EKQNENLKSKVASNPVSQTSTNAKASTPALASG, AELAQNKQQSSVTTASPRSNALNANTPKAAAPSSN, VGPG…SSKL, and TGKD…KKRV. Polar residues-rich tracts occupy residues 474 to 483 and 507 to 532; these read LPESSEQNRG and ANSLSEISYNQQSECRSSELNVNEDS. Serine 509 carries the phosphoserine modification. Composition is skewed to basic and acidic residues over residues 549–561 and 577–595; these read MYEKENTPIHHNE and EETKQEKPSKLKETVESKR. Polar residues predominate over residues 596 to 606; the sequence is LSTGVQKQSPA. 2 positions are modified to phosphoserine: serine 604 and serine 637. Composition is skewed to polar residues over residues 658–676 and 707–721; these read EKSNSDQPPVAIPSTSKTG and VASNPVSQTSTNAKA. Residues serine 775, serine 829, serine 838, and serine 840 each carry the phosphoserine modification. 2 stretches are compositionally biased toward polar residues: residues 825–859 and 943–966; these read VNQQSPSAQQTTRSPSKVSATLNAGNSQASTSSKL and DGQQSNNKSQSELGNSSGAWSQVV.

It belongs to the SMY2/mpd2 family.

The protein localises to the cytoplasm. Its function is as follows. Has a role in mRNA export from the nucleus. This Schizosaccharomyces pombe (strain 972 / ATCC 24843) (Fission yeast) protein is GYF domain-containing protein mpd2 (mpd2).